We begin with the raw amino-acid sequence, 463 residues long: Thiamine-repressible acid phosphatase SPBC21H7.03c (463 aa).

Residues 1–18 (MQLCIISLWFLAAFIVNA) form the signal peptide. His-69 (nucleophile) is an active-site residue. Residues Asn-98, Asn-104, Asn-221, and Asn-324 are each glycosylated (N-linked (GlcNAc...) asparagine). The Proton donor role is filled by Asp-341. Residues Asn-439 and Asn-458 are each glycosylated (N-linked (GlcNAc...) asparagine).

It belongs to the histidine acid phosphatase family.

It localises to the secreted. It is found in the cell wall. It carries out the reaction a phosphate monoester + H2O = an alcohol + phosphate. In terms of biological role, may dephosphorylate thiamine phosphates. The sequence is that of Thiamine-repressible acid phosphatase SPBC21H7.03c from Schizosaccharomyces pombe (strain 972 / ATCC 24843) (Fission yeast).